Consider the following 139-residue polypeptide: Phosphoribosyl-AMP cyclohydrolase (139 aa).

Asp91 provides a ligand contact to Mg(2+). Cys92 serves as a coordination point for Zn(2+). Positions 93 and 95 each coordinate Mg(2+). Cys110 and Cys117 together coordinate Zn(2+).

It belongs to the PRA-CH family. In terms of assembly, homodimer. Requires Mg(2+) as cofactor. Zn(2+) serves as cofactor.

The protein localises to the cytoplasm. It catalyses the reaction 1-(5-phospho-beta-D-ribosyl)-5'-AMP + H2O = 1-(5-phospho-beta-D-ribosyl)-5-[(5-phospho-beta-D-ribosylamino)methylideneamino]imidazole-4-carboxamide. The protein operates within amino-acid biosynthesis; L-histidine biosynthesis; L-histidine from 5-phospho-alpha-D-ribose 1-diphosphate: step 3/9. In terms of biological role, catalyzes the hydrolysis of the adenine ring of phosphoribosyl-AMP. The sequence is that of Phosphoribosyl-AMP cyclohydrolase from Brucella canis (strain ATCC 23365 / NCTC 10854 / RM-666).